A 150-amino-acid chain; its full sequence is Arginine repressor (150 aa).

Belongs to the ArgR family.

The protein resides in the cytoplasm. It participates in amino-acid biosynthesis; L-arginine biosynthesis [regulation]. Regulates arginine biosynthesis genes. This Clostridium botulinum (strain 657 / Type Ba4) protein is Arginine repressor.